The following is a 1048-amino-acid chain: PH and SEC7 domain-containing protein 3 (1048 aa).

Residues 36–45 show a composition bias toward basic and acidic residues; sequence SEGKAPDTSD. The interval 36 to 57 is disordered; that stretch reads SEGKAPDTSDHGGSTLLPPNVT. A Phosphoserine modification is found at serine 76. 4 disordered regions span residues 104–126, 310–342, 364–383, and 395–434; these read LDSV…LKEQ, GGDK…KVPR, SWKA…SPVR, and QENK…PGYT. Residues 311–321 show a composition bias toward basic and acidic residues; it reads GDKRETQHPID. Residues 397 to 423 are compositionally biased toward basic and acidic residues; sequence NKQHLEKTPKPERDRERISEQEEHVKG. One can recognise an SEC7 domain in the interval 534–734; that stretch reads TKGTPEIAFW…KALYNSIKNE (201 aa). The segment covering 741–758 has biased composition (basic and acidic residues); it reads DDEEKKKSPSESTEEKAN. The tract at residues 741–769 is disordered; sequence DDEEKKKSPSESTEEKANGTHPKTISRIG. At serine 770 the chain carries Phosphoserine. The PH domain occupies 785–898; that stretch reads AVYKSGFLAR…WINKINCVAA (114 aa). A coiled-coil region spans residues 922–952; the sequence is ATTTKLSQEEQLKSHESKLKQITTELAEHRS. The interval 999 to 1048 is disordered; it reads DESEAAGLKKSHSSPSLNPDTSPITAKVKRNVSERKDHRPETPSIKQKVT. Phosphoserine occurs at positions 1009, 1011, 1012, 1014, and 1020. A compositionally biased stretch (polar residues) spans 1011–1022; that stretch reads SSPSLNPDTSPI. Over residues 1029 to 1039 the composition is skewed to basic and acidic residues; the sequence is NVSERKDHRPE.

As to expression, isoform 2 is expressed in epididymis (at protein level).

It localises to the cell membrane. It is found in the cell projection. Its subcellular location is the ruffle membrane. The protein resides in the postsynaptic density. Functionally, guanine nucleotide exchange factor for ARF6. This is PH and SEC7 domain-containing protein 3 (PSD3) from Homo sapiens (Human).